A 242-amino-acid chain; its full sequence is Phosducin-like protein 2 (242 aa).

The 168-residue stretch at V34–A201 folds into the Phosducin domain. Residues F89–K242 form a thioredoxin fold region.

Belongs to the phosducin family. In terms of assembly, interacts with the CCT chaperonin complex and actin.

Its subcellular location is the endoplasmic reticulum. In terms of biological role, essential for male fertility, spermiogenesis and acrosome formation. The protein is Phosducin-like protein 2 (PDCL2) of Bos taurus (Bovine).